We begin with the raw amino-acid sequence, 272 residues long: MSASGEISTPQEYIGHHLNNLQLDMRTFELVNHHTASSFWVLNIDSMFFSLLLGAIFLLIFGRVAKGATSGVPGKMQTFVELVVGFVDGSVRDMFHGKSKLIAPLALTIFVWVFLMNLMDLLPIDLLPYLGEHVLGLPALRVVPSADVNITLSMALGVFILILYYSVMMKGIGGFVKELTLQPFNHPIFIPVNLILEGVSLLSKPVSLGLRLFGNMYAGELIFILIAGLLPWWSQWILNVPWAIFHILIITLQAFIFMVLTIVYLAMASEEH.

The next 5 helical transmembrane spans lie at 41–61, 101–121, 143–165, 221–241, and 243–263; these read VLNI…LLIF, LIAP…LMDL, VPSA…ILYY, LIFI…LNVP, and AIFH…LTIV.

This sequence belongs to the ATPase A chain family. In terms of assembly, F-type ATPases have 2 components, CF(1) - the catalytic core - and CF(0) - the membrane proton channel. CF(1) has five subunits: alpha(3), beta(3), gamma(1), delta(1), epsilon(1). CF(0) has three main subunits: a(1), b(2) and c(9-12). The alpha and beta chains form an alternating ring which encloses part of the gamma chain. CF(1) is attached to CF(0) by a central stalk formed by the gamma and epsilon chains, while a peripheral stalk is formed by the delta and b chains.

Its subcellular location is the cell inner membrane. Key component of the proton channel; it plays a direct role in the translocation of protons across the membrane. The chain is ATP synthase subunit a from Sodalis glossinidius (strain morsitans).